The primary structure comprises 902 residues: Cysteine-tryptophan domain-containing zinc finger protein 3 (902 aa).

A CW-type zinc finger spans residues 21 to 74 (VLIEDNWVCCDMCHKWRLLPYGTNTSMLPKKWICSMLDWLPGMNKCDISEDETT). Zn(2+) is bound by residues Cys30, Cys33, Cys54, and Cys66. Disordered regions lie at residues 131 to 233 (EHDQ…EDRH), 326 to 345 (EDNR…NENL), 420 to 480 (QSST…LNAD), and 537 to 651 (HGPT…SASP). Composition is skewed to basic and acidic residues over residues 151–169 (KNRE…DPVS) and 193–203 (SHSDGGDLTEK). Residues 204 to 213 (SKKHSKSKNR) show a composition bias toward basic residues. 2 stretches are compositionally biased toward basic and acidic residues: residues 214 to 233 (RGID…EDRH) and 335 to 345 (HTSKGGDNENL). Over residues 421-433 (SSTVATSSSSKVS) the composition is skewed to low complexity. Polar residues-rich tracts occupy residues 450–463 (ESVS…SNTD), 564–588 (NSAP…QIEM), and 599–611 (IDNQ…IGQD). Positions 612–625 (NHSHMKEGKSEVHT) are enriched in basic and acidic residues. Residues 634–648 (KNHTQLRSNVENGDS) show a composition bias toward polar residues.

Expressed in leaf sheaths, flag leaves, nodes, internodes and panicles.

Its subcellular location is the nucleus. Functionally, binds to histones H3K4me1, H3K4me2 and H3K4me3 in GST pull-down assay. May facilitate the recruitment of effectors to mediate gene expression. The chain is Cysteine-tryptophan domain-containing zinc finger protein 3 from Oryza sativa subsp. japonica (Rice).